The chain runs to 428 residues: Nucleoside diphosphate phosphatase ENTPD5 (428 aa).

Residues 1-24 (MATSWGTVFFMLVVSCVCSAVSHR) form the signal peptide. E172 (proton acceptor) is an active-site residue. The N-linked (GlcNAc...) asparagine glycan is linked to N232. Disulfide bonds link C272/C303 and C363/C377. N368 carries N-linked (GlcNAc...) asparagine glycosylation.

This sequence belongs to the GDA1/CD39 NTPase family. Monomer; active form. Homodimer; disulfide-linked. Homodimers are enzymatically inactive. The cofactor is Ca(2+). Requires Mg(2+) as cofactor. Post-translationally, N-glycosylated; high-mannose type. Glycosylation is not essential for enzymatic activity. Expressed in adult liver, kidney, prostate, testis and colon. Much weaker expression in other tissues.

It is found in the endoplasmic reticulum. It localises to the secreted. The catalysed reaction is a ribonucleoside 5'-diphosphate + H2O = a ribonucleoside 5'-phosphate + phosphate + H(+). It catalyses the reaction GDP + H2O = GMP + phosphate + H(+). It carries out the reaction UDP + H2O = UMP + phosphate + H(+). The enzyme catalyses IDP + H2O = IMP + phosphate + H(+). The catalysed reaction is CDP + H2O = CMP + phosphate + H(+). It catalyses the reaction ADP + H2O = AMP + phosphate + H(+). It participates in protein modification; protein glycosylation. Its function is as follows. Hydrolyzes nucleoside diphosphates with a preference for GDP, IDP and UDP compared to ADP and CDP. In the lumen of the endoplasmic reticulum, hydrolyzes UDP that acts as an end-product feedback inhibitor of the UDP-Glc:glycoprotein glucosyltransferases. UMP can be transported back by an UDP-sugar antiporter to the cytosol where it is consumed to regenerate UDP-glucose. Therefore, it positively regulates protein reglucosylation by clearing UDP from the ER lumen and by promoting the regeneration of UDP-glucose. Protein reglucosylation is essential to proper glycoprotein folding and quality control in the ER. This chain is Nucleoside diphosphate phosphatase ENTPD5, found in Homo sapiens (Human).